The following is a 507-amino-acid chain: Wax ester synthase/diacylglycerol acyltransferase 5 (507 aa).

The Cytoplasmic segment spans residues 1–211; the sequence is MEIKIRRRRG…LKTSSRCYSR (211 aa). Residue H161 is the Proton acceptor of the active site. The helical transmembrane segment at 212–232 threads the bilayer; the sequence is FFWLVMVLWSAALLVLNTVCD. Residues 233-507 are Lumenal-facing; that stretch reads ALEFIATALF…VVVQERTSTQ (275 aa). N314 and N421 each carry an N-linked (GlcNAc...) asparagine glycan.

This sequence in the N-terminal section; belongs to the long-chain O-acyltransferase family. Mostly expressed in flowers and siliques.

It localises to the cell membrane. Its subcellular location is the endoplasmic reticulum membrane. It catalyses the reaction a long chain fatty alcohol + a fatty acyl-CoA = a wax ester + CoA. The enzyme catalyses an acyl-CoA + a 1,2-diacyl-sn-glycerol = a triacyl-sn-glycerol + CoA. Its pathway is glycerolipid metabolism; triacylglycerol biosynthesis. The protein operates within lipid metabolism. Its function is as follows. Bifunctional wax ester synthase/diacylglycerol acyltransferase. Involved in cuticular wax biosynthesis. This is Wax ester synthase/diacylglycerol acyltransferase 5 from Arabidopsis thaliana (Mouse-ear cress).